The chain runs to 197 residues: Outer membrane protein 26 (197 aa).

Residues 1 to 23 (MKNIAKVTALALGIALASGYASA) form the signal peptide.

It belongs to the Skp family.

The protein resides in the cell outer membrane. The polypeptide is Outer membrane protein 26 (omp26) (Haemophilus influenzae (strain ATCC 51907 / DSM 11121 / KW20 / Rd)).